Reading from the N-terminus, the 524-residue chain is Serine/threonine-protein phosphatase 2A 56 kDa regulatory subunit gamma isoform (524 aa).

Met1 is modified (N-acetylmethionine). Positions 476–508 are disordered; that stretch reads SDEARQAQKELKKDRPLVRRKSELPQDPHTEKA.

This sequence belongs to the phosphatase 2A regulatory subunit B56 family. In terms of assembly, PP2A consists of a common heterodimeric core enzyme, composed of PPP2CA a 36 kDa catalytic subunit (subunit C) and PPP2R1A a 65 kDa constant regulatory subunit (PR65 or subunit A), that associates with a variety of regulatory subunits. Proteins that associate with the core dimer include three families of regulatory subunits B (the R2/B/PR55/B55, R3/B''/PR72/PR130/PR59 and R5/B'/B56 families), the 48 kDa variable regulatory subunit, viral proteins, and cell signaling molecules. Interacts with SGO1. Interacts with SGO1; the interaction is direct. May interact with TP53. Interacts with IER3 and/or ERK kinases; regulates ERK dephosphorylation. Interacts with CIP2A; this interaction stabilizes CIP2A. In terms of tissue distribution, highest levels in heart, liver and brain. Lower levels in skeletal muscle, spleen, kidney and lung. Isoform 4 is testis-specific.

The protein resides in the nucleus. It localises to the chromosome. The protein localises to the centromere. Its function is as follows. The B regulatory subunit might modulate substrate selectivity and catalytic activity, and might also direct the localization of the catalytic enzyme to a particular subcellular compartment. The PP2A-PPP2R5C holoenzyme may activate TP53 and play a role in DNA damage-induced inhibition of cell proliferation. PP2A-PPP2R5C may also regulate the ERK signaling pathway through ERK dephosphorylation. In Mus musculus (Mouse), this protein is Serine/threonine-protein phosphatase 2A 56 kDa regulatory subunit gamma isoform (Ppp2r5c).